The sequence spans 332 residues: ATP-dependent 6-phosphofructokinase (332 aa).

Position 11 (G11) interacts with ATP. R21–R25 contacts ADP. ATP contacts are provided by residues R72 to C73 and G102 to S105. Position 103 (D103) interacts with Mg(2+). T126–D128 is a substrate binding site. D128 serves as the catalytic Proton acceptor. R155 provides a ligand contact to ADP. Residues R163 and M170–R172 contribute to the substrate site. ADP is bound by residues G186 to E188, R212, and K214 to H216. Substrate-binding positions include E223, R256, and H262 to R265.

This sequence belongs to the phosphofructokinase type A (PFKA) family. ATP-dependent PFK group I subfamily. Prokaryotic clade 'B1' sub-subfamily. In terms of assembly, homotetramer. The cofactor is Mg(2+).

The protein localises to the cytoplasm. It catalyses the reaction beta-D-fructose 6-phosphate + ATP = beta-D-fructose 1,6-bisphosphate + ADP + H(+). The protein operates within carbohydrate degradation; glycolysis; D-glyceraldehyde 3-phosphate and glycerone phosphate from D-glucose: step 3/4. Allosterically activated by ADP and other diphosphonucleosides, and allosterically inhibited by phosphoenolpyruvate. Catalyzes the phosphorylation of D-fructose 6-phosphate to fructose 1,6-bisphosphate by ATP, the first committing step of glycolysis. This chain is ATP-dependent 6-phosphofructokinase, found in Halothermothrix orenii (strain H 168 / OCM 544 / DSM 9562).